The chain runs to 545 residues: POTE ankyrin domain family member H (545 aa).

ANK repeat units follow at residues 180–208, 209–238, 242–271, 275–304, 308–337, 341–370, and 374–404; these read LHRA…KKDK, QKRT…QLNI, KKRT…DPNI, YGNT…DIES, HGLT…NLNA, YGRT…DVSS, and SGQT…QILK. A disordered region spans residues 406–524; it reads SSENSNPEQD…KQLSEEQNTG (119 aa). 2 stretches are compositionally biased toward basic and acidic residues: residues 414–429 and 443–458; these read QDLK…RLKG and EINK…EMKK. Residues 513–524 are compositionally biased toward polar residues; that stretch reads TQKQLSEEQNTG.

It belongs to the POTE family.

The protein is POTE ankyrin domain family member H (POTEH) of Homo sapiens (Human).